A 316-amino-acid chain; its full sequence is HTH-type transcriptional regulator cbl (316 aa).

Positions 1-59 constitute an HTH lysR-type domain; the sequence is MNFQQLKIIREAARQDYNLTEVANMLFTSQSGVSRHIRELEDELGIEIFVRRGKRLLGM. The segment at residues 19 to 38 is a DNA-binding region (H-T-H motif); it reads LTEVANMLFTSQSGVSRHIR.

This sequence belongs to the LysR transcriptional regulatory family.

In terms of biological role, may be an accessory regulatory protein within the cys regulon. This is HTH-type transcriptional regulator cbl (cbl) from Escherichia coli (strain K12).